The following is a 514-amino-acid chain: MAGGAFVSEGGGGGRSYEGGVTAFVIMTCIVAAMGGLLFGYDLGISGGVTSMEEFLTKFFPQVESQMKKAKHDTAYCKFDNQMLQLFTSSLYLAALVASFMASVITRKHGRKVSMFIGGLAFLIGALFNAFAVNVSMLIIGRLLLGVGVGFANQSTPVYLSEMAPAKIRGALNIGFQMAITIGILVANLINYGTSKMAQHGWRVSLGLAAVPAVVMVIGSFILPDTPNSMLERGKNEEAKQMLKKIRGADNVDHEFQDLIDAVEAAKKVENPWKNIMESKYRPALIFCSAIPFFQQITGINVIMFYAPVLFKTLGFGDDAALMSAVITGVVNMLSTFVSIYAVDRYGRRLLFLEGGIQMFICQLLVGSFIGARFGTSGTGTLTPATADWILAFICVYVAGFAWSWGPLGWLVPSEICPLEIRPAGQAINVSVNMFFTFLIGQFFLTMLCHMKFGLFYFFASMVAIMTVFIYFLLPETKGVPIEEMGRVWKQHWFWKKYIPEDAIIGGHDDNNTN.

Residues 1-18 (MAGGAFVSEGGGGGRSYE) are Cytoplasmic-facing. A run of 10 helical transmembrane segments spans residues 19–39 (GGVTAFVIMTCIVAAMGGLLF), 86–106 (LFTSSLYLAALVASFMASVIT), 113–133 (VSMFIGGLAFLIGALFNAFAV), 135–155 (VSMLIIGRLLLGVGVGFANQS), 170–190 (GALNIGFQMAITIGILVANLI), 204–224 (VSLGLAAVPAVVMVIGSFILP), 285–305 (LIFCSAIPFFQQITGINVIMF), 320–340 (AALMSAVITGVVNMLSTFVSI), 350–370 (LLFLEGGIQMFICQLLVGSFI), and 389–409 (WILAFICVYVAGFAWSWGPLG). Cys77 and Cys449 are joined by a disulfide. Beta-D-glucose is bound at residue Gln177. Beta-D-glucose is bound by residues Gln295, Gln296, Asn301, and Asn332. Trp410 contacts beta-D-glucose. Transmembrane regions (helical) follow at residues 428–448 (INVSVNMFFTFLIGQFFLTML) and 453–473 (FGLFYFFASMVAIMTVFIYFL). Residues 474–514 (LPETKGVPIEEMGRVWKQHWFWKKYIPEDAIIGGHDDNNTN) lie on the Cytoplasmic side of the membrane.

The protein belongs to the major facilitator superfamily. Sugar transporter (TC 2.A.1.1) family. As to expression, expressed in primordia of lateral roots, pollinated stigmata, and pollen tubes.

Its subcellular location is the membrane. The enzyme catalyses D-glucose(out) + H(+)(out) = D-glucose(in) + H(+)(in). The catalysed reaction is D-mannose(out) + H(+)(out) = D-mannose(in) + H(+)(in). It carries out the reaction D-galactose(in) + H(+)(in) = D-galactose(out) + H(+)(out). Its function is as follows. Hexose-H(+) symporter that catalyzes the high-affinity uptake of glucose, galactose and mannose. Proton-coupled symporter responsible for the uptake of glucose from the apoplast into the cells. In Arabidopsis thaliana (Mouse-ear cress), this protein is Sugar transport protein 10.